The following is a 233-amino-acid chain: 1-(5-phosphoribosyl)-5-[(5-phosphoribosylamino)methylideneamino] imidazole-4-carboxamide isomerase (233 aa).

Asp-8 (proton acceptor) is an active-site residue. Asp-125 serves as the catalytic Proton donor.

The protein belongs to the HisA/HisF family.

The protein localises to the cytoplasm. It carries out the reaction 1-(5-phospho-beta-D-ribosyl)-5-[(5-phospho-beta-D-ribosylamino)methylideneamino]imidazole-4-carboxamide = 5-[(5-phospho-1-deoxy-D-ribulos-1-ylimino)methylamino]-1-(5-phospho-beta-D-ribosyl)imidazole-4-carboxamide. It functions in the pathway amino-acid biosynthesis; L-histidine biosynthesis; L-histidine from 5-phospho-alpha-D-ribose 1-diphosphate: step 4/9. In Thermococcus kodakarensis (strain ATCC BAA-918 / JCM 12380 / KOD1) (Pyrococcus kodakaraensis (strain KOD1)), this protein is 1-(5-phosphoribosyl)-5-[(5-phosphoribosylamino)methylideneamino] imidazole-4-carboxamide isomerase.